Here is a 276-residue protein sequence, read N- to C-terminus: Protein G1 (276 aa).

2 disordered regions span residues 1–30 (MSSS…SQKR) and 178–213 (SYHK…ATAP). Basic and acidic residues predominate over residues 21-30 (RPSRYESQKR). Residues 24–183 (RYESQKRRDW…ARGISYHKKK (160 aa)) enclose the ALOG domain. The span at 178-187 (SYHKKKKRRG) shows a compositional bias: basic residues. A Nuclear localization signal motif is present at residues 181–185 (KKKKR). Gly residues predominate over residues 189 to 202 (NMNGARGGGGGGAR). Low complexity predominate over residues 203–213 (AGVNDGDATAP).

The protein belongs to the plant homeotic and developmental regulators ALOG protein family. As to expression, expressed at the empty glumes of immature spikelets, which are lemmas of the sterile florets located at the lateral side of the spikelet, throughout their development.

The protein localises to the nucleus. Probable transcription regulator that acts as a developmental regulator by promoting cell growth in response to light. Transcription regulator that restrains empty glumes growth, lemmas of the sterile florets located at the lateral side of the rice spikelet, to maintain their small size, probably by repressing lemma identity via transcription regulation. In Oryza sativa subsp. japonica (Rice), this protein is Protein G1 (G1).